The following is a 2566-amino-acid chain: Highly reducing polyketide synthase verA (2566 aa).

In terms of domain architecture, Ketosynthase family 3 (KS3) spans 3–440 (PEPIAIIGTG…GTNAHAILES (438 aa)). A disordered region spans residues 35 to 61 (VASEPPSTRFDNRSFYDPDPSHPGTTN). Residues 44–54 (FDNRSFYDPDP) show a composition bias toward basic and acidic residues. Active-site for beta-ketoacyl synthase activity residues include Cys176, His316, and His360. The tract at residues 554 to 880 (IFTGQGAQWP…IGLSNRGASG (327 aa)) is malonyl-CoA:ACP transacylase (MAT) domain. Residue Ser648 is the For malonyltransferase activity of the active site. The tract at residues 950 to 1081 (HPLLGSLEAD…GKLLICWGNP (132 aa)) is N-terminal hotdog fold. A dehydratase (DH) domain region spans residues 950–1246 (HPLLGSLEAD…EGVHISPLGP (297 aa)). A PKS/mFAS DH domain is found at 950–1250 (HPLLGSLEAD…ISPLGPPDRQ (301 aa)). His982 functions as the Proton acceptor; for dehydratase activity in the catalytic mechanism. The interval 1096 to 1250 (AGAVDIKDFY…ISPLGPPDRQ (155 aa)) is C-terminal hotdog fold. The active-site Proton donor; for dehydratase activity is Asp1156. The tract at residues 1386–1581 (DVLSRFYKED…TGFGGIDTIT (196 aa)) is methyltransferase (CMet) domain. The tract at residues 2127-2294 (KTYLLVGMTG…RRARNIVGSI (168 aa)) is ketoreductase (KR) domain. Positions 2411–2489 (EAAEIVAAGL…ALTADSVSKL (79 aa)) constitute a Carrier domain. Ser2449 carries the O-(pantetheine 4'-phosphoryl)serine modification. Residues 2505–2540 (KDVSGLTSPPEVPSDASRSSVSSGMDEIVTPESPSF) form a disordered region. Residues 2518-2527 (SDASRSSVSS) show a composition bias toward low complexity.

Pantetheine 4'-phosphate serves as cofactor.

It functions in the pathway secondary metabolite biosynthesis; terpenoid biosynthesis. Its pathway is mycotoxin biosynthesis. In terms of biological role, highly reducing polyketide synthase (HR-PKS); part of the gene cluster that mediates the biosynthesis of the neurotoxin verrucosidin, a methylated alpha-pyrone polyketide that inhibits oxidative phosphorylation in mitochondria and thereby causes neurological diseases. The carbon backbone of verrucosidin is synthesized by the HR-PKS verA, and further modified by the other verrucodidin cluster enzymes. The protein is Highly reducing polyketide synthase verA of Penicillium polonicum.